A 331-amino-acid chain; its full sequence is Endo-1,4-beta-xylanase 2 (331 aa).

Positions 1–17 (MKASSVLLGLAPLAALA) are cleaved as a signal peptide. Residues 31 to 329 (QQSIDALMKA…KPAYNSVVQA (299 aa)) enclose the GH10 domain. N-linked (GlcNAc...) asparagine glycosylation is present at asparagine 105. Catalysis depends on glutamate 159, which acts as the Proton donor. The Nucleophile role is filled by glutamate 266. A disulfide bridge links cysteine 284 with cysteine 290. Asparagine 301 carries an N-linked (GlcNAc...) asparagine glycan.

This sequence belongs to the glycosyl hydrolase 10 (cellulase F) family.

It localises to the secreted. The catalysed reaction is Endohydrolysis of (1-&gt;4)-beta-D-xylosidic linkages in xylans.. The protein operates within glycan degradation; xylan degradation. In terms of biological role, endo-1,4-beta-xylanase involved in the hydrolysis of xylan, a major structural heterogeneous polysaccharide found in plant biomass representing the second most abundant polysaccharide in the biosphere, after cellulose. Accounts for approximately 70 percent of the endoxylanase activity in the culture filtrate. This is Endo-1,4-beta-xylanase 2 (XYL2) from Pyricularia grisea (Crabgrass-specific blast fungus).